The primary structure comprises 156 residues: Ribosomal RNA large subunit methyltransferase H (156 aa).

S-adenosyl-L-methionine is bound by residues Leu-73, Gly-104, and 123–128 (LSSLTL).

This sequence belongs to the RNA methyltransferase RlmH family. As to quaternary structure, homodimer.

It localises to the cytoplasm. The enzyme catalyses pseudouridine(1915) in 23S rRNA + S-adenosyl-L-methionine = N(3)-methylpseudouridine(1915) in 23S rRNA + S-adenosyl-L-homocysteine + H(+). Its function is as follows. Specifically methylates the pseudouridine at position 1915 (m3Psi1915) in 23S rRNA. This is Ribosomal RNA large subunit methyltransferase H from Neisseria gonorrhoeae (strain NCCP11945).